The primary structure comprises 547 residues: Chaperonin GroEL (547 aa).

ATP-binding positions include 30-33 (TLGP), lysine 51, 87-91 (DGTTT), glycine 415, and aspartate 496.

This sequence belongs to the chaperonin (HSP60) family. As to quaternary structure, forms a cylinder of 14 subunits composed of two heptameric rings stacked back-to-back. Interacts with the co-chaperonin GroES.

The protein resides in the cytoplasm. It carries out the reaction ATP + H2O + a folded polypeptide = ADP + phosphate + an unfolded polypeptide.. Functionally, together with its co-chaperonin GroES, plays an essential role in assisting protein folding. The GroEL-GroES system forms a nano-cage that allows encapsulation of the non-native substrate proteins and provides a physical environment optimized to promote and accelerate protein folding. The sequence is that of Chaperonin GroEL from Chlorobium limicola (strain DSM 245 / NBRC 103803 / 6330).